Here is a 120-residue protein sequence, read N- to C-terminus: MTMTHLNRLILISLLFVSLLLKSSTASSTVVDEGNRTSRNFRYRTHRFVPRFNHHPYHVTPHRSCDSFIRPYARSMCIELQRIHRSSRKQPLLSPPPPEIDPRYGVDKRLVPSGPNPLHN.

The first 26 residues, 1–26, serve as a signal peptide directing secretion; it reads MTMTHLNRLILISLLFVSLLLKSSTA. Asn-35 is a glycosylation site (N-linked (GlcNAc...) asparagine). The segment at 85–120 is disordered; the sequence is RSSRKQPLLSPPPPEIDPRYGVDKRLVPSGPNPLHN. The span at 100–110 shows a compositional bias: basic and acidic residues; that stretch reads IDPRYGVDKRL. 2 positions are modified to hydroxyproline: Pro-112 and Pro-115. A glycan (O-linked (Ara...) hydroxyproline) is linked at Pro-115.

It belongs to the CLV3/ESR signal peptide family. Post-translationally, the O-glycosylation (arabinosylation) of the hydroxyproline Pro-115 enhances binding affinity of the CLE9p peptide for its receptor. In terms of tissue distribution, mostly expressed in leaves, flowers, stems and apex, and, to a lower extent, in seedlings, roots, siliques and pollen.

Its subcellular location is the secreted. It localises to the extracellular space. In terms of biological role, extracellular signal peptide that regulates cell fate. Represses root apical meristem maintenance. Regulates the transition of protophloem cells from proliferation to differentiation, thus impinging on postembryonic growth capacity of the root meristem; this signaling pathway requires CRN and CLV2. The sequence is that of CLAVATA3/ESR (CLE)-related protein 9 from Arabidopsis thaliana (Mouse-ear cress).